A 515-amino-acid chain; its full sequence is 2-isopropylmalate synthase (515 aa).

The region spanning 4–266 (IKFFDTTLRD…ETRLNLQEIK (263 aa)) is the Pyruvate carboxyltransferase domain. Mn(2+)-binding residues include aspartate 13, histidine 201, histidine 203, and asparagine 237. Residues 391–515 (QLSSIQVQYG…RGENEKVATP (125 aa)) are regulatory domain.

This sequence belongs to the alpha-IPM synthase/homocitrate synthase family. LeuA type 1 subfamily. As to quaternary structure, homodimer. Mn(2+) is required as a cofactor.

The protein resides in the cytoplasm. It carries out the reaction 3-methyl-2-oxobutanoate + acetyl-CoA + H2O = (2S)-2-isopropylmalate + CoA + H(+). Its pathway is amino-acid biosynthesis; L-leucine biosynthesis; L-leucine from 3-methyl-2-oxobutanoate: step 1/4. Its function is as follows. Catalyzes the condensation of the acetyl group of acetyl-CoA with 3-methyl-2-oxobutanoate (2-ketoisovalerate) to form 3-carboxy-3-hydroxy-4-methylpentanoate (2-isopropylmalate). The sequence is that of 2-isopropylmalate synthase from Geobacillus kaustophilus (strain HTA426).